Consider the following 323-residue polypeptide: Lipoyl synthase (323 aa).

The [4Fe-4S] cluster site is built by Cys65, Cys70, Cys76, Cys91, Cys95, Cys98, and Ser304. A Radical SAM core domain is found at 77-293 (FNNGTATFMI…KKEALSIGFT (217 aa)).

It belongs to the radical SAM superfamily. Lipoyl synthase family. Requires [4Fe-4S] cluster as cofactor.

It is found in the cytoplasm. The enzyme catalyses [[Fe-S] cluster scaffold protein carrying a second [4Fe-4S](2+) cluster] + N(6)-octanoyl-L-lysyl-[protein] + 2 oxidized [2Fe-2S]-[ferredoxin] + 2 S-adenosyl-L-methionine + 4 H(+) = [[Fe-S] cluster scaffold protein] + N(6)-[(R)-dihydrolipoyl]-L-lysyl-[protein] + 4 Fe(3+) + 2 hydrogen sulfide + 2 5'-deoxyadenosine + 2 L-methionine + 2 reduced [2Fe-2S]-[ferredoxin]. Its pathway is protein modification; protein lipoylation via endogenous pathway; protein N(6)-(lipoyl)lysine from octanoyl-[acyl-carrier-protein]: step 2/2. Its function is as follows. Catalyzes the radical-mediated insertion of two sulfur atoms into the C-6 and C-8 positions of the octanoyl moiety bound to the lipoyl domains of lipoate-dependent enzymes, thereby converting the octanoylated domains into lipoylated derivatives. In Buchnera aphidicola subsp. Acyrthosiphon pisum (strain APS) (Acyrthosiphon pisum symbiotic bacterium), this protein is Lipoyl synthase.